The sequence spans 604 residues: Proline--tRNA ligase (604 aa).

Belongs to the class-II aminoacyl-tRNA synthetase family. ProS type 1 subfamily. As to quaternary structure, homodimer.

The protein localises to the cytoplasm. It catalyses the reaction tRNA(Pro) + L-proline + ATP = L-prolyl-tRNA(Pro) + AMP + diphosphate. Catalyzes the attachment of proline to tRNA(Pro) in a two-step reaction: proline is first activated by ATP to form Pro-AMP and then transferred to the acceptor end of tRNA(Pro). As ProRS can inadvertently accommodate and process non-cognate amino acids such as alanine and cysteine, to avoid such errors it has two additional distinct editing activities against alanine. One activity is designated as 'pretransfer' editing and involves the tRNA(Pro)-independent hydrolysis of activated Ala-AMP. The other activity is designated 'posttransfer' editing and involves deacylation of mischarged Ala-tRNA(Pro). The misacylated Cys-tRNA(Pro) is not edited by ProRS. This is Proline--tRNA ligase from Nostoc punctiforme (strain ATCC 29133 / PCC 73102).